The following is a 670-amino-acid chain: Transketolase (670 aa).

H31 contributes to the substrate binding site. Thiamine diphosphate is bound by residues H71 and G120 to L122. D161 is a Mg(2+) binding site. Residues G162 and N191 each contribute to the thiamine diphosphate site. Positions 191 and 193 each coordinate Mg(2+). Residues H268, R362, and S389 each contribute to the substrate site. H268 contributes to the thiamine diphosphate binding site. E416 acts as the Proton donor in catalysis. F443 contacts thiamine diphosphate. Substrate contacts are provided by H467, D475, and R528.

In terms of assembly, homodimer. Mg(2+) is required as a cofactor. Requires Ca(2+) as cofactor. It depends on Mn(2+) as a cofactor. The cofactor is Co(2+). Thiamine diphosphate serves as cofactor.

It catalyses the reaction D-sedoheptulose 7-phosphate + D-glyceraldehyde 3-phosphate = aldehydo-D-ribose 5-phosphate + D-xylulose 5-phosphate. Its function is as follows. Catalyzes the transfer of a two-carbon ketol group from a ketose donor to an aldose acceptor, via a covalent intermediate with the cofactor thiamine pyrophosphate. This is Transketolase (tkt) from Nostoc sp. (strain PCC 7120 / SAG 25.82 / UTEX 2576).